A 98-amino-acid chain; its full sequence is NADH-ubiquinone oxidoreductase chain 4L (98 aa).

A run of 3 helical transmembrane segments spans residues methionine 1–valine 21, serine 29–leucine 49, and isoleucine 58–leucine 78.

The protein belongs to the complex I subunit 4L family. As to quaternary structure, core subunit of respiratory chain NADH dehydrogenase (Complex I) which is composed of 45 different subunits.

The protein resides in the mitochondrion inner membrane. The catalysed reaction is a ubiquinone + NADH + 5 H(+)(in) = a ubiquinol + NAD(+) + 4 H(+)(out). In terms of biological role, core subunit of the mitochondrial membrane respiratory chain NADH dehydrogenase (Complex I) which catalyzes electron transfer from NADH through the respiratory chain, using ubiquinone as an electron acceptor. Part of the enzyme membrane arm which is embedded in the lipid bilayer and involved in proton translocation. This chain is NADH-ubiquinone oxidoreductase chain 4L (MT-ND4L), found in Pongo abelii (Sumatran orangutan).